We begin with the raw amino-acid sequence, 430 residues long: UPF0597 protein DSY1109 (430 aa).

Belongs to the UPF0597 family.

The sequence is that of UPF0597 protein DSY1109 from Desulfitobacterium hafniense (strain Y51).